We begin with the raw amino-acid sequence, 224 residues long: Pleckstrin homology domain-containing family B member 2 (224 aa).

Residues 2-109 (AFVKSGWLLR…WKIALQDART (108 aa)) enclose the PH domain. Lysine 20 is a binding site for a 1,2-diacyl-sn-glycero-3-phospho-L-serine.

Its subcellular location is the recycling endosome membrane. In terms of biological role, involved in retrograde transport of recycling endosomes. The polypeptide is Pleckstrin homology domain-containing family B member 2 (PLEKHB2) (Gallus gallus (Chicken)).